Here is a 241-residue protein sequence, read N- to C-terminus: Proteasome subunit alpha (241 aa).

Belongs to the peptidase T1A family. As to quaternary structure, the 20S proteasome core is composed of 14 alpha and 14 beta subunits that assemble into four stacked heptameric rings, resulting in a barrel-shaped structure. The two inner rings, each composed of seven catalytic beta subunits, are sandwiched by two outer rings, each composed of seven alpha subunits. The catalytic chamber with the active sites is on the inside of the barrel. Has a gated structure, the ends of the cylinder being occluded by the N-termini of the alpha-subunits. Is capped by the proteasome-associated ATPase, ARC.

The protein localises to the cytoplasm. The protein operates within protein degradation; proteasomal Pup-dependent pathway. Its activity is regulated as follows. The formation of the proteasomal ATPase ARC-20S proteasome complex, likely via the docking of the C-termini of ARC into the intersubunit pockets in the alpha-rings, may trigger opening of the gate for substrate entry. Interconversion between the open-gate and close-gate conformations leads to a dynamic regulation of the 20S proteasome proteolysis activity. Functionally, component of the proteasome core, a large protease complex with broad specificity involved in protein degradation. This is Proteasome subunit alpha from Frankia alni (strain DSM 45986 / CECT 9034 / ACN14a).